Reading from the N-terminus, the 801-residue chain is Triacylglycerol lipase SDP1L (801 aa).

N-linked (GlcNAc...) asparagine glycosylation occurs at Asn130. 2 consecutive transmembrane segments (helical) span residues 232–249 (ALLLSGGASLGAFHLGVV) and 261–277 (IIAGSSVGSVMCAVVGT). Positions 233–436 (LLLSGGASLG…EMDLPMIQLK (204 aa)) constitute a PNPLA domain. Positions 264 to 268 (GSSVG) match the GXSXG motif. The active-site Nucleophile is the Ser266. N-linked (GlcNAc...) asparagine glycosylation is found at Asn328 and Asn332. Catalysis depends on Asp423, which acts as the Proton acceptor. Residues Asn605, Asn620, Asn649, Asn653, Asn708, and Asn759 are each glycosylated (N-linked (GlcNAc...) asparagine). The interval 648–675 (SNRTSNLSHTYDAGSECDSPEAEDWTRS) is disordered. The interval 750–801 (MNSEPEDSQNESEIPETPESVQLDSPEKDIIDGESSASEDGDAQANLIHDHE) is disordered. Over residues 753-765 (EPEDSQNESEIPE) the composition is skewed to acidic residues.

In terms of tissue distribution, highly expressed in mature pollen.

The protein resides in the lipid droplet. The protein localises to the membrane. The catalysed reaction is a triacylglycerol + H2O = a diacylglycerol + a fatty acid + H(+). May be involved in the release of fatty acids from the oil body in germinating seedlings. Can hydrolyze triacylglycerols in vitro. This chain is Triacylglycerol lipase SDP1L, found in Arabidopsis thaliana (Mouse-ear cress).